The sequence spans 458 residues: tRNA(Ile)-lysidine synthase (458 aa).

35 to 40 (SGGVDS) is an ATP binding site.

It belongs to the tRNA(Ile)-lysidine synthase family.

It is found in the cytoplasm. The catalysed reaction is cytidine(34) in tRNA(Ile2) + L-lysine + ATP = lysidine(34) in tRNA(Ile2) + AMP + diphosphate + H(+). Functionally, ligates lysine onto the cytidine present at position 34 of the AUA codon-specific tRNA(Ile) that contains the anticodon CAU, in an ATP-dependent manner. Cytidine is converted to lysidine, thus changing the amino acid specificity of the tRNA from methionine to isoleucine. The protein is tRNA(Ile)-lysidine synthase of Nitrosomonas europaea (strain ATCC 19718 / CIP 103999 / KCTC 2705 / NBRC 14298).